A 177-amino-acid polypeptide reads, in one-letter code: Probable chemoreceptor glutamine deamidase CheD (177 aa).

Belongs to the CheD family.

The catalysed reaction is L-glutaminyl-[protein] + H2O = L-glutamyl-[protein] + NH4(+). Probably deamidates glutamine residues to glutamate on methyl-accepting chemotaxis receptors (MCPs), playing an important role in chemotaxis. The sequence is that of Probable chemoreceptor glutamine deamidase CheD from Pseudomonas savastanoi pv. phaseolicola (strain 1448A / Race 6) (Pseudomonas syringae pv. phaseolicola (strain 1448A / Race 6)).